The sequence spans 217 residues: 7-cyano-7-deazaguanine synthase (217 aa).

10-20 (FSGGQDSTTCL) serves as a coordination point for ATP. Zn(2+) is bound by residues cysteine 185, cysteine 194, cysteine 197, and cysteine 200.

The protein belongs to the QueC family. In terms of assembly, homodimer. Zn(2+) serves as cofactor.

It carries out the reaction 7-carboxy-7-deazaguanine + NH4(+) + ATP = 7-cyano-7-deazaguanine + ADP + phosphate + H2O + H(+). It functions in the pathway purine metabolism; 7-cyano-7-deazaguanine biosynthesis. In terms of biological role, catalyzes the ATP-dependent conversion of 7-carboxy-7-deazaguanine (CDG) to 7-cyano-7-deazaguanine (preQ(0)). The protein is 7-cyano-7-deazaguanine synthase of Streptococcus thermophilus (strain ATCC BAA-491 / LMD-9).